A 312-amino-acid polypeptide reads, in one-letter code: Aspartate carbamoyltransferase catalytic subunit (312 aa).

Carbamoyl phosphate is bound by residues R55 and T56. L-aspartate is bound at residue K83. The carbamoyl phosphate site is built by R105, H138, and Q141. L-aspartate-binding residues include R171 and R225. Residues G266 and P267 each contribute to the carbamoyl phosphate site.

Belongs to the aspartate/ornithine carbamoyltransferase superfamily. ATCase family. In terms of assembly, heterododecamer (2C3:3R2) of six catalytic PyrB chains organized as two trimers (C3), and six regulatory PyrI chains organized as three dimers (R2).

The catalysed reaction is carbamoyl phosphate + L-aspartate = N-carbamoyl-L-aspartate + phosphate + H(+). It functions in the pathway pyrimidine metabolism; UMP biosynthesis via de novo pathway; (S)-dihydroorotate from bicarbonate: step 2/3. Functionally, catalyzes the condensation of carbamoyl phosphate and aspartate to form carbamoyl aspartate and inorganic phosphate, the committed step in the de novo pyrimidine nucleotide biosynthesis pathway. The chain is Aspartate carbamoyltransferase catalytic subunit from Corynebacterium glutamicum (strain ATCC 13032 / DSM 20300 / JCM 1318 / BCRC 11384 / CCUG 27702 / LMG 3730 / NBRC 12168 / NCIMB 10025 / NRRL B-2784 / 534).